The primary structure comprises 267 residues: 2-keto-3-deoxy-L-rhamnonate aldolase (267 aa).

His-49 serves as the catalytic Proton acceptor. A substrate-binding site is contributed by Gln-151. Residue Glu-153 coordinates Mg(2+). 2 residues coordinate substrate: Ala-178 and Asp-179. Asp-179 contributes to the Mg(2+) binding site.

It belongs to the HpcH/HpaI aldolase family. KDR aldolase subfamily. In terms of assembly, homohexamer. It depends on Mg(2+) as a cofactor.

The catalysed reaction is 2-dehydro-3-deoxy-L-rhamnonate = (S)-lactaldehyde + pyruvate. Its function is as follows. Catalyzes the reversible retro-aldol cleavage of 2-keto-3-deoxy-L-rhamnonate (KDR) to pyruvate and lactaldehyde. The sequence is that of 2-keto-3-deoxy-L-rhamnonate aldolase from Salmonella enteritidis PT4 (strain P125109).